The chain runs to 498 residues: NAD(P)H-quinone oxidoreductase chain 4, chloroplastic (498 aa).

A run of 14 helical transmembrane segments spans residues 4-24 (LPWL…IPLL), 37-57 (LGIC…QFHL), 87-107 (MGLI…AWPV), 111-131 (VRLF…LFAS), 134-154 (ILLF…LLSM), 167-187 (FLLY…TMGL), 207-227 (IAVE…KLPI), 242-262 (HYST…YGLI), 274-294 (FLFS…ASLI), 305-325 (IAYS…SITD), 331-351 (AILQ…LAGI), 386-406 (LALP…GIVT), 417-437 (IILF…LSML), and 461-481 (IFIS…PNLV).

Belongs to the complex I subunit 4 family.

It is found in the plastid. The protein localises to the chloroplast thylakoid membrane. The catalysed reaction is a plastoquinone + NADH + (n+1) H(+)(in) = a plastoquinol + NAD(+) + n H(+)(out). It carries out the reaction a plastoquinone + NADPH + (n+1) H(+)(in) = a plastoquinol + NADP(+) + n H(+)(out). This chain is NAD(P)H-quinone oxidoreductase chain 4, chloroplastic, found in Psilotum nudum (Whisk fern).